The primary structure comprises 195 residues: Large ribosomal subunit protein bL9 (195 aa).

It belongs to the bacterial ribosomal protein bL9 family.

Binds to the 23S rRNA. The protein is Large ribosomal subunit protein bL9 of Rhodopseudomonas palustris (strain TIE-1).